Reading from the N-terminus, the 155-residue chain is Transcriptional regulator MraZ (155 aa).

SpoVT-AbrB domains follow at residues 7 to 63 and 92 to 135; these read REQH…EPSV and LDQT…EPLR.

The protein belongs to the MraZ family. As to quaternary structure, forms oligomers.

The protein localises to the cytoplasm. The protein resides in the nucleoid. The protein is Transcriptional regulator MraZ of Chlorobaculum tepidum (strain ATCC 49652 / DSM 12025 / NBRC 103806 / TLS) (Chlorobium tepidum).